Here is a 138-residue protein sequence, read N- to C-terminus: Cysteine desulfuration protein SufE (138 aa).

Catalysis depends on Cys-51, which acts as the Cysteine persulfide intermediate.

This sequence belongs to the SufE family. In terms of assembly, homodimer. Interacts with SufS.

It localises to the cytoplasm. Its pathway is cofactor biosynthesis; iron-sulfur cluster biosynthesis. Its function is as follows. Participates in cysteine desulfuration mediated by SufS. Cysteine desulfuration mobilizes sulfur from L-cysteine to yield L-alanine and constitutes an essential step in sulfur metabolism for biosynthesis of a variety of sulfur-containing biomolecules. Functions as a sulfur acceptor for SufS, by mediating the direct transfer of the sulfur atom from the S-sulfanylcysteine of SufS, an intermediate product of cysteine desulfuration process. The sequence is that of Cysteine desulfuration protein SufE from Salmonella dublin (strain CT_02021853).